The sequence spans 129 residues: Protein Turandot A1/2 (129 aa).

Positions 1–21 (MNSSTALMCFALLLISPLCLG) are cleaved as a signal peptide. A glycan (N-linked (GlcNAc...) asparagine) is linked at Asn-49.

This sequence belongs to the Turandot family.

It is found in the secreted. A humoral factor that plays a role in stress tolerance; gives increased resistance to the lethal effects of bacterial challenge and stress. Regulated by the JAK/STAT pathway and NF-KB-like Relish pathway in the fat body, upd3 in the hemocytes and Mekk1 in response to septic injury and consequent immune response. The chain is Protein Turandot A1/2 (TotA1) from Drosophila sechellia (Fruit fly).